A 207-amino-acid polypeptide reads, in one-letter code: Guanylate kinase (207 aa).

The Guanylate kinase-like domain occupies 4 to 184 (GTLYIVSAPS…ALMDFKAIIR (181 aa)). 11-18 (APSGAGKS) contributes to the ATP binding site.

Belongs to the guanylate kinase family.

It localises to the cytoplasm. The enzyme catalyses GMP + ATP = GDP + ADP. Essential for recycling GMP and indirectly, cGMP. In Vibrio vulnificus (strain CMCP6), this protein is Guanylate kinase.